The chain runs to 61 residues: Putative antitoxin RelB2 (61 aa).

Its function is as follows. Antitoxin component of a type II toxin-antitoxin (TA) system. Its cognate toxin is RelE2 (Potential). The polypeptide is Putative antitoxin RelB2 (relB2) (Methanocaldococcus jannaschii (strain ATCC 43067 / DSM 2661 / JAL-1 / JCM 10045 / NBRC 100440) (Methanococcus jannaschii)).